A 1164-amino-acid chain; its full sequence is DNA-directed RNA polymerase 132 kDa polypeptide (1164 aa).

Belongs to the RNA polymerase beta chain family. In terms of assembly, the DNA-dependent RNA polymerase used for intermediate and late genes expression consists of eight subunits (147) kDa, (133) kDa, (35) kDa, (30) kDa, (22) kDa, (19) kDa, (18) kDa and (7) kDa totalling more than 500 kDa in mass. The same holoenzyme, with the addition of the transcription-specificity factor RAP94, is used for early gene expression.

The protein resides in the virion. The catalysed reaction is RNA(n) + a ribonucleoside 5'-triphosphate = RNA(n+1) + diphosphate. Part of the DNA-dependent RNA polymerase which catalyzes the transcription of viral DNA into RNA using the four ribonucleoside triphosphates as substrates. Responsible for the transcription of early, intermediate and late genes. DNA-dependent RNA polymerase associates with the early transcription factor (ETF), itself composed of D6 and A7, thereby allowing the early genes transcription. Late transcription, and probably also intermediate transcription, require newly synthesized RNA polymerase. This is DNA-directed RNA polymerase 132 kDa polypeptide (RPO132) from Mus musculus (Mouse).